The chain runs to 625 residues: Dual specificity protein phosphatase 8 (625 aa).

Residues 23–138 form the Rhodanese domain; that stretch reads GPGGPLVIDS…FSSCFPGLCE (116 aa). The Tyrosine-protein phosphatase domain occupies 160–302; sequence GLTRILPHLY…LLEYERSLKL (143 aa). Cys246 functions as the Phosphocysteine intermediate in the catalytic mechanism. Positions 306-586 are disordered; that stretch reads LQGDPGTPSG…PAPETQFKRR (281 aa). Basic and acidic residues predominate over residues 380-389; the sequence is SSDRLQDTNR. The span at 431 to 448 shows a compositional bias: low complexity; sequence AALGLSSPSPDSPDAAPE. Over residues 555 to 570 the composition is skewed to basic and acidic residues; it reads DLRRREAARAEPRDAR.

The protein belongs to the protein-tyrosine phosphatase family. Non-receptor class dual specificity subfamily. Monomer. Abundant in brain, heart and skeletal muscle.

The protein localises to the cytoplasm. It is found in the nucleus. The catalysed reaction is O-phospho-L-tyrosyl-[protein] + H2O = L-tyrosyl-[protein] + phosphate. It catalyses the reaction O-phospho-L-seryl-[protein] + H2O = L-seryl-[protein] + phosphate. It carries out the reaction O-phospho-L-threonyl-[protein] + H2O = L-threonyl-[protein] + phosphate. Functionally, has phosphatase activity with synthetic phosphatase substrates and negatively regulates mitogen-activated protein kinase activity, presumably by catalysing their dephosphorylation. Expected to display protein phosphatase activity toward phosphotyrosine, phosphoserine and phosphothreonine residues. The protein is Dual specificity protein phosphatase 8 (DUSP8) of Homo sapiens (Human).